Reading from the N-terminus, the 281-residue chain is Phosphoglycerate mutase-like protein AT74H (281 aa).

Residue H17 is the Tele-phosphohistidine intermediate of the active site. Residue E109 is the Proton donor/acceptor of the active site.

This sequence belongs to the phosphoglycerate mutase family.

In terms of biological role, may play a role in carbohydrates metabolism. The sequence is that of Phosphoglycerate mutase-like protein AT74H from Arabidopsis thaliana (Mouse-ear cress).